The primary structure comprises 1374 residues: F-actin-uncapping protein LRRC16A (1374 aa).

M1 carries the post-translational modification N-acetylmethionine. Residue S122 is modified to Phosphoserine. LRR repeat units follow at residues 245-269 (SNRL…LAGA), 275-298 (NSGL…SLSI), 304-327 (PKGL…SLCQ), 336-363 (ASTL…FLAQ), 391-418 (LQCL…SFKQ), 423-447 (SLAL…LLLG), 485-510 (IHNI…VWLS), 547-570 (DSPL…IINA), 574-597 (NTSL…MLAK), and 658-682 (LQKI…AYRL). The stretch at 714-738 (GDAIQEDLKAAERLMRDAKNSKTLL) forms a coiled coil. Residue T920 is modified to Phosphothreonine. 2 disordered regions span residues 961–982 (PFPS…PSEE) and 1040–1374 (KMDC…FIFV). Residues 962–985 (FPSVRQEKRSSGLISELPSEEGRR) form an LRR 11 repeat. The tract at residues 962–1084 (FPSVRQEKRS…LIKSRSRSER (123 aa)) is inhibits capping activity of CP. Phosphoserine is present on S972. Residues 1040-1064 (KMDCKRSSSRSSDAHELGEGDEKKK) are compositionally biased toward basic and acidic residues. A necessary for localization at the cell membrane region spans residues 1058–1092 (EGDEKKKRDSRRSGFLNLIKSRSRSERPPTVLMTE). A Phosphoserine modification is found at S1096. 2 stretches are compositionally biased toward basic and acidic residues: residues 1108–1132 (TTRK…KTPE) and 1141–1150 (EAGRAERSDS). A compositionally biased stretch (polar residues) spans 1191–1204 (VISQDPSSPVSCNT). T1229 carries the post-translational modification Phosphothreonine. Basic and acidic residues predominate over residues 1232–1244 (KNAKAEPRVDGGC). Low complexity predominate over residues 1245–1263 (RSRSSSSMPTSPKPLLQSP). S1281, S1289, S1291, S1295, S1319, S1328, and S1335 each carry phosphoserine. Positions 1317-1330 (QNSSQSSPRSFSQE) are enriched in low complexity. The segment covering 1343–1356 (QEQKQRSSGKDGHQ) has biased composition (basic and acidic residues). The residue at position 1363 (S1363) is a Phosphoserine.

It belongs to the CARMIL family. In terms of assembly, homodimer. Interacts (via C-terminus) with heterodimeric capping protein (CP); this interaction uncaps barbed ends capped by CP, enhances barbed-end actin polymerization and promotes lamellipodial formation and cell migration. Interacts with MYO1E. Interacts with TRIO.

It localises to the cytoplasm. Its subcellular location is the cytoskeleton. It is found in the cell membrane. The protein resides in the cell projection. The protein localises to the lamellipodium. Its function is as follows. Cell membrane-cytoskeleton-associated protein that plays a role in the regulation of actin polymerization at the barbed end of actin filaments. Prevents F-actin heterodimeric capping protein (CP) activity at the leading edges of migrating cells, and hence generates uncapped barbed ends and enhances actin polymerization, however, seems unable to nucleate filaments. Plays a role in lamellipodial protrusion formations and cell migration. This is F-actin-uncapping protein LRRC16A from Mus musculus (Mouse).